Here is a 477-residue protein sequence, read N- to C-terminus: Proton-coupled amino acid transporter 3 (477 aa).

Residues 1–13 are compositionally biased toward basic and acidic residues; sequence MGKTPLLREDGRC. The interval 1 to 42 is disordered; it reads MGKTPLLREDGRCQRNTFGGSKASSKGSSSSSSNNTVSSKKK. At 1-54 the chain is on the cytoplasmic side; that stretch reads MGKTPLLREDGRCQRNTFGGSKASSKGSSSSSSNNTVSSKKKPRRKADALMFIQ. Low complexity predominate over residues 19–38; the sequence is GGSKASSKGSSSSSSNNTVS. A helical transmembrane segment spans residues 55–75; the sequence is IFIHLLKSNIGTGFLGLPLAV. Over 76–77 the chain is Extracellular; it reads KN. A helical membrane pass occupies residues 78-98; sequence AGLLVGPVSLLAIGALTVHCM. The Cytoplasmic portion of the chain corresponds to 99 to 144; sequence DILLNCACHLTSRLQRSFVNYEETTMYSLETCPSPWLRTHSVWGRY. Residues 145-165 form a helical membrane-spanning segment; the sequence is VVSFLLIVTQLGFCSVYFMFM. Residues 166–202 lie on the Extracellular side of the membrane; sequence ADNLQQIVEEAHFTSNVCQPRQSLVMTSILDTRFYML. Residues 203–223 traverse the membrane as a helical segment; sequence TILPFLILLVLVQNPQVLSIF. Residues 224-225 are Cytoplasmic-facing; the sequence is ST. Residues 226-246 form a helical membrane-spanning segment; that stretch reads LATITTLSSLALIFEYLIQIP. Topologically, residues 247–259 are extracellular; sequence HHSHLPLVASWKT. A helical transmembrane segment spans residues 260–280; sequence FLLFFGTAIFTFEGVGMVLPL. The Cytoplasmic portion of the chain corresponds to 281-291; sequence KSQMKSPQQFP. Residues 292 to 312 traverse the membrane as a helical segment; sequence AVLYLGMSFVIFLYICLGTLG. Residues 313 to 344 lie on the Extracellular side of the membrane; that stretch reads YMKFGADTQASITLNLPNCWLYQSVKLMYSVG. Residues 345-365 form a helical membrane-spanning segment; sequence IFFTYALQFHVPAEIIVPYVV. At 366 to 374 the chain is on the cytoplasmic side; the sequence is SRASENWAL. Residues 375–395 traverse the membrane as a helical segment; the sequence is FIDLTVRAALVCLTCFSAVLI. Topologically, residues 396-399 are extracellular; that stretch reads PRLD. A helical membrane pass occupies residues 400-420; the sequence is LVISLVGSVSSSALALIIPPL. Over 421–439 the chain is Cytoplasmic; the sequence is LEIATFYSENISCTTIAKD. Residues 440–460 form a helical membrane-spanning segment; it reads IMISILGLLGCVLGTYQALYE. Residues 461-477 are Extracellular-facing; it reads MTQQSRFPMLNSTNVHT.

Belongs to the amino acid/polyamine transporter 2 family.

It localises to the membrane. The protein is Proton-coupled amino acid transporter 3 (Slc36a3) of Rattus norvegicus (Rat).